Here is a 535-residue protein sequence, read N- to C-terminus: Bifunctional purine biosynthesis protein PurH (535 aa).

Residues 1–145 form the MGS-like domain; the sequence is MAQTALISVS…KNWKDVGVLT (145 aa).

This sequence belongs to the PurH family.

The enzyme catalyses (6R)-10-formyltetrahydrofolate + 5-amino-1-(5-phospho-beta-D-ribosyl)imidazole-4-carboxamide = 5-formamido-1-(5-phospho-D-ribosyl)imidazole-4-carboxamide + (6S)-5,6,7,8-tetrahydrofolate. It carries out the reaction IMP + H2O = 5-formamido-1-(5-phospho-D-ribosyl)imidazole-4-carboxamide. It functions in the pathway purine metabolism; IMP biosynthesis via de novo pathway; 5-formamido-1-(5-phospho-D-ribosyl)imidazole-4-carboxamide from 5-amino-1-(5-phospho-D-ribosyl)imidazole-4-carboxamide (10-formyl THF route): step 1/1. It participates in purine metabolism; IMP biosynthesis via de novo pathway; IMP from 5-formamido-1-(5-phospho-D-ribosyl)imidazole-4-carboxamide: step 1/1. The polypeptide is Bifunctional purine biosynthesis protein PurH (Variovorax paradoxus (strain S110)).